A 486-amino-acid chain; its full sequence is NADH-quinone oxidoreductase subunit N (486 aa).

Transmembrane regions (helical) follow at residues 8 to 28, 36 to 56, 74 to 94, 104 to 124, 125 to 145, 160 to 180, 201 to 221, 239 to 259, 269 to 289, 298 to 318, 329 to 349, 376 to 396, 410 to 432, and 459 to 479; these read LTAL…ILSI, FVAV…YFLI, ILYI…SYPW, EFYL…ISHH, MASF…LIAY, IILS…VYSI, ILVV…KLSI, VLSF…LNFL, VIYF…NLMA, FLGY…LVSH, AIYL…VNLI, SVLT…GFIG, WLIG…RIIL, and IVIC…NPLI.

This sequence belongs to the complex I subunit 2 family. NDH-1 is composed of 13 different subunits. Subunits NuoA, H, J, K, L, M, N constitute the membrane sector of the complex.

It localises to the cell membrane. It carries out the reaction a quinone + NADH + 5 H(+)(in) = a quinol + NAD(+) + 4 H(+)(out). Its function is as follows. NDH-1 shuttles electrons from NADH, via FMN and iron-sulfur (Fe-S) centers, to quinones in the respiratory chain. The immediate electron acceptor for the enzyme in this species is believed to be ubiquinone. Couples the redox reaction to proton translocation (for every two electrons transferred, four hydrogen ions are translocated across the cytoplasmic membrane), and thus conserves the redox energy in a proton gradient. The protein is NADH-quinone oxidoreductase subunit N of Buchnera aphidicola subsp. Acyrthosiphon pisum (strain APS) (Acyrthosiphon pisum symbiotic bacterium).